Consider the following 398-residue polypeptide: Cystathionine gamma-lyase (398 aa).

Residue Ser50 is modified to Phosphoserine. Residues Arg61, Tyr113, and Arg118 each contribute to the substrate site. N6-(pyridoxal phosphate)lysine is present on Lys211. Glu338 lines the substrate pocket.

Belongs to the trans-sulfuration enzymes family. Homotetramer. Interacts with CALM in a calcium-dependent manner. It depends on pyridoxal 5'-phosphate as a cofactor.

It localises to the cytoplasm. It catalyses the reaction L,L-cystathionine + H2O = 2-oxobutanoate + L-cysteine + NH4(+). It carries out the reaction L-homoserine = 2-oxobutanoate + NH4(+). The catalysed reaction is L-selenocystathionine + H2O = L-selenocysteine + 2-oxobutanoate + NH4(+). The enzyme catalyses L-cysteine + H2O = hydrogen sulfide + pyruvate + NH4(+) + H(+). It catalyses the reaction L-homocysteine + H2O = 2-oxobutanoate + hydrogen sulfide + NH4(+) + H(+). It functions in the pathway amino-acid biosynthesis; L-cysteine biosynthesis; L-cysteine from L-homocysteine and L-serine: step 2/2. Catalyzes the last step in the trans-sulfuration pathway from L-methionine to L-cysteine in a pyridoxal-5'-phosphate (PLP)-dependent manner, which consists on cleaving the L,L-cystathionine molecule into L-cysteine, ammonia and 2-oxobutanoate. Part of the L-cysteine derived from the trans-sulfuration pathway is utilized for biosynthesis of the ubiquitous antioxidant glutathione. Besides its role in the conversion of L-cystathionine into L-cysteine, it utilizes L-cysteine and L-homocysteine as substrates (at much lower rates than L,L-cystathionine) to produce hydrogen sulfide (H2S). In vitro, it converts two L-cysteine molecules into lanthionine and H2S, and two L-homocysteine molecules to homolanthionine and H2S, which can be particularly relevant under conditions of severe hyperhomocysteinemia. Lanthionine and homolanthionine are structural homologs of L,L-cystathionine that differ by the absence or presence of an extra methylene group, respectively. Acts as a cysteine-protein sulfhydrase by mediating sulfhydration of target proteins: sulfhydration consists of converting -SH groups into -SSH on specific cysteine residues of target proteins such as GAPDH, PTPN1 and NF-kappa-B subunit RELA, thereby regulating their function. By generating the gasotransmitter H2S, it participates in a number of physiological processes such as vasodilation, bone protection, and inflammation. Plays an essential role in myogenesis by contributing to the biogenesis of H2S in skeletal muscle tissue. Can also accept homoserine as substrate. Catalyzes the elimination of selenocystathionine (which can be derived from the diet) to yield selenocysteine, ammonia and 2-oxobutanoate. This is Cystathionine gamma-lyase (Cth) from Rattus norvegicus (Rat).